Consider the following 297-residue polypeptide: Mitochondrial nicotinamide adenine dinucleotide transporter SLC25A51 (297 aa).

Over residues Met1–Pro11 the composition is skewed to basic and acidic residues. The disordered stretch occupies residues Met1–Asp20. 3 Solcar repeats span residues Val28–Leu108, Pro116–His200, and Asn213–Val296. 6 consecutive transmembrane segments (helical) span residues Cys36 to Phe56, Leu85 to Leu105, Pro116 to Phe135, Ile179 to Glu199, Phe215 to Val235, and Leu268 to Thr289.

This sequence belongs to the mitochondrial carrier (TC 2.A.29) family.

It localises to the mitochondrion inner membrane. It carries out the reaction NAD(+)(in) = NAD(+)(out). In terms of biological role, mitochondrial membrane carrier protein that mediates the import of NAD(+) into mitochondria. Mitochondrial NAD(+) is required for glycolysis and mitochondrial respiration. Compared to SLC25A52, SLC25A51-mediated transport is essential for the import of NAD(+) in mitochondria. The transport mechanism, uniport or antiport, its electrogenicity and substrate selectivity, remain to be elucidated. The protein is Mitochondrial nicotinamide adenine dinucleotide transporter SLC25A51 of Homo sapiens (Human).